The primary structure comprises 642 residues: Bifunctional protein glk (642 aa).

Residues 1-340 are glucokinase; sequence MSTGAQSKAV…QLSNRSGGAS (340 aa). 23–28 lines the ATP pocket; that stretch reads ADVGGT. The 77-residue stretch at 341–417 folds into the HTH rpiR-type domain; it reads SAVFERIRQM…LKLATGLTGT (77 aa). A putative HTH-type transcriptional regulator region spans residues 341–642; sequence SAVFERIRQM…SPAAKDVARD (302 aa). A DNA-binding region (H-T-H motif) is located at residues 377 to 396; the sequence is IVDIARKADVSQPTVIRFCR. Residues 461-600 form the SIS domain; sequence AIEILNGARR…AVGVAIRRAS (140 aa). Residues 576-596 form a helical membrane-spanning segment; that stretch reads SMISRILHLLMIDILAVGVAI.

The protein in the N-terminal section; belongs to the bacterial glucokinase family.

Its subcellular location is the membrane. The enzyme catalyses D-glucose + ATP = D-glucose 6-phosphate + ADP + H(+). The chain is Bifunctional protein glk (glk) from Burkholderia orbicola (strain AU 1054).